We begin with the raw amino-acid sequence, 193 residues long: Ion-translocating oxidoreductase complex subunit B (193 aa).

A hydrophobic region spans residues 1–23; the sequence is MTFLFIVITLLALIFGAILGFAS. Positions 29 to 87 constitute a 4Fe-4S domain; that stretch reads EADPVVEKIDAILPQSQCGQCGYPGCKPYAEAICNGDEITKCIPGGQTTIVKIAEILGV. [4Fe-4S] cluster contacts are provided by Cys46, Cys49, Cys54, Cys70, Cys110, Cys113, Cys116, Cys120, Cys140, Cys143, Cys146, and Cys150. 4Fe-4S ferredoxin-type domains follow at residues 101–130 and 131–160; these read KVAF…GTNK and AMHT…MIPV.

Belongs to the 4Fe4S bacterial-type ferredoxin family. RnfB subfamily. In terms of assembly, the complex is composed of six subunits: RnfA, RnfB, RnfC, RnfD, RnfE and RnfG. [4Fe-4S] cluster is required as a cofactor.

The protein resides in the cell inner membrane. Its function is as follows. Part of a membrane-bound complex that couples electron transfer with translocation of ions across the membrane. The chain is Ion-translocating oxidoreductase complex subunit B from Haemophilus influenzae (strain 86-028NP).